A 359-amino-acid chain; its full sequence is Glutamine synthetase (359 aa).

The region spanning 28 to 107 is the GS beta-grasp domain; it reads VMAEYIWIDG…VLAACYTADG (80 aa). Positions 114-359 constitute a GS catalytic domain; that stretch reads HRDACAKLLE…GIITETMFEH (246 aa). Ser-273 carries the post-translational modification Phosphoserine. Thr-303 is subject to Phosphothreonine. A Phosphoserine modification is found at Ser-305.

The protein belongs to the glutamine synthetase family. Homooctamer.

It localises to the cytoplasm. The enzyme catalyses L-glutamate + NH4(+) + ATP = L-glutamine + ADP + phosphate + H(+). The sequence is that of Glutamine synthetase (gln1) from Schizosaccharomyces pombe (strain 972 / ATCC 24843) (Fission yeast).